Consider the following 190-residue polypeptide: MAFIAKSFYDLSAISLDGEKVDFNTFRGRAVLIENVASLUGTTTRDFTQLNELQCRFPRRLVVLGFPCNQFGHQENCQNEEILNSLKYVRPGGGYQPTFTLVQKCEVNGQNEHPVFAYLKDKLPYPHDDPFSLMTDPKLIIWSPVRRSDVAWNFEKFLIGPEVEPFRRYSRTFPTINIEPDIKRLLKVAI.

Residue selenocysteine 40 is part of the active site. A non-standard amino acid (selenocysteine) is located at residue selenocysteine 40.

Belongs to the glutathione peroxidase family. In terms of assembly, homotetramer. In terms of tissue distribution, exclusively expressed in the stomach and small intestine.

The protein resides in the cytoplasm. It localises to the cytosol. It carries out the reaction 2 glutathione + H2O2 = glutathione disulfide + 2 H2O. It catalyses the reaction a hydroperoxy polyunsaturated fatty acid + 2 glutathione = a hydroxy polyunsaturated fatty acid + glutathione disulfide + H2O. The enzyme catalyses tert-butyl hydroperoxide + 2 glutathione = tert-butanol + glutathione disulfide + H2O. The catalysed reaction is cumene hydroperoxide + 2 glutathione = 2-phenylpropan-2-ol + glutathione disulfide + H2O. It carries out the reaction (13S)-hydroperoxy-(9Z,11E)-octadecadienoate + 2 glutathione = (13S)-hydroxy-(9Z,11E)-octadecadienoate + glutathione disulfide + H2O. It catalyses the reaction (5S)-hydroperoxy-(6E,8Z,11Z,14Z)-eicosatetraenoate + 2 glutathione = (5S)-hydroxy-(6E,8Z,11Z,14Z)-eicosatetraenoate + glutathione disulfide + H2O. The enzyme catalyses (12R)-hydroperoxy-(5Z,8Z,10E,14Z)-eicosatetraenoate + 2 glutathione = (12R)-hydroxy-(5Z,8Z,10E,14Z)-eicosatetraenoate + glutathione disulfide + H2O. The catalysed reaction is (15S)-hydroperoxy-(5Z,8Z,11Z,13E)-eicosatetraenoate + 2 glutathione = (15S)-hydroxy-(5Z,8Z,11Z,13E)-eicosatetraenoate + glutathione disulfide + H2O. In terms of biological role, catalyzes the reduction of hydroperoxides in a glutathione-dependent manner thus regulating cellular redox homeostasis. Can reduce small soluble hydroperoxides such as H2O2, cumene hydroperoxide and tert-butyl hydroperoxide, as well as several fatty acid-derived hydroperoxides. Cannot reduce phosphatidycholine hydroperoxide. This Macaca fuscata fuscata (Japanese macaque) protein is Glutathione peroxidase 2 (GPX2).